A 691-amino-acid chain; its full sequence is Methionine--tRNA ligase (691 aa).

The short motif at 12 to 22 (PYANGSFHIGH) is the 'HIGH' region element. Zn(2+) contacts are provided by cysteine 143, cysteine 146, cysteine 156, and cysteine 159. The 'KMSKS' region signature appears at 341-345 (KMSKS). Lysine 344 contacts ATP. Residues 585–691 (DFVKVDLRIA…PGAQPGMRIH (107 aa)) enclose the tRNA-binding domain.

It belongs to the class-I aminoacyl-tRNA synthetase family. MetG type 1 subfamily. As to quaternary structure, homodimer. Requires Zn(2+) as cofactor.

It is found in the cytoplasm. It catalyses the reaction tRNA(Met) + L-methionine + ATP = L-methionyl-tRNA(Met) + AMP + diphosphate. Is required not only for elongation of protein synthesis but also for the initiation of all mRNA translation through initiator tRNA(fMet) aminoacylation. In Bordetella avium (strain 197N), this protein is Methionine--tRNA ligase.